The primary structure comprises 154 residues: uncharacterized protein (154 aa).

12 to 19 (GSSDVGKT) serves as a coordination point for GTP. One can recognise a G domain in the interval 17–112 (GKTTLMENLI…KIPYGIFINK (96 aa)).

To M.thermoautotrophicum MTH765.

This is an uncharacterized protein from Methanocaldococcus jannaschii (strain ATCC 43067 / DSM 2661 / JAL-1 / JCM 10045 / NBRC 100440) (Methanococcus jannaschii).